The chain runs to 115 residues: Alpha-endosulfine (115 aa).

Residues 1–10 are compositionally biased toward polar residues; that stretch reads MSSENLSDTQ. Residues 1–27 form a disordered region; it reads MSSENLSDTQMEYEDEKQDSQEKNANL. The residue at position 65 (Ser65) is a Phosphoserine; by GWL. Residues 77-115 are disordered; that stretch reads NKQLPVAGPDKNLVTGDHIPTPQDLPQRRSSLVTSKLAG. Residues 104-115 are compositionally biased toward polar residues; that stretch reads RRSSLVTSKLAG.

Belongs to the endosulfine family. Post-translationally, phosphorylation at Ser-65 by gwl during mitosis is essential for interaction with ppp2r2d (PR55-delta) and subsequent inactivation of PP2A.

The protein resides in the cytoplasm. In terms of biological role, protein phosphatase inhibitor that specifically inhibits protein phosphatase 2A (PP2A) during mitosis. When phosphorylated at Ser-67 during mitosis, specifically interacts with ppp2r2d (PR55-delta) and inhibits its activity, leading to inactivation of PP2A, an essential condition to keep cyclin-B1-CDK1 activity high during M phase. The sequence is that of Alpha-endosulfine (ensa) from Salmo salar (Atlantic salmon).